A 1174-amino-acid polypeptide reads, in one-letter code: Ankyrin repeat and LEM domain-containing protein 2 homolog (1174 aa).

Low complexity-rich tracts occupy residues 37–56 (NPAS…SAAS), 150–164 (SSPT…SSPT), 174–198 (LGSN…SSSN), and 205–219 (QQQM…PQQP). Disordered stretches follow at residues 37–74 (NPAS…YEDP) and 141–230 (PIIS…PFRA). An ANK repeat occupies 338-367 (RGETPLHFAAKNGHVAMVEVLVSYPECKSL). Disordered regions lie at residues 519-543 (AEAT…HNNN) and 961-981 (GSSS…SPGI). Residues 521–532 (ATSSPKPTKNVP) show a composition bias toward polar residues. Low complexity predominate over residues 533-543 (NGTNECEHNNN).

Belongs to the ANKLE2 family.

Its subcellular location is the endoplasmic reticulum. It is found in the nucleus envelope. It localises to the cytoplasm. Involved in brain development probably by regulating asymmetric division of neuroblasts. Regulates neuroblast asymmetric cell division by controlling asymmetric protein localization of Mira, Baz, Par-6 and aPKC, and spindle alignment. Also, regulates the localization of kinase Ball during mitosis, specifically maintaining Ball in the nucleus during interphase. Required for proper ER and nuclear envelope morphology in neuroblasts. In Drosophila melanogaster (Fruit fly), this protein is Ankyrin repeat and LEM domain-containing protein 2 homolog.